A 680-amino-acid polypeptide reads, in one-letter code: Zinc finger protein 334 (680 aa).

The 72-residue stretch at 10–81 folds into the KRAB domain; it reads VSFQDLTVNF…EEFSNQNYPD (72 aa). C2H2-type zinc fingers lie at residues 237 to 259, 265 to 287, 293 to 315, 321 to 343, 349 to 371, 377 to 399, 405 to 427, 433 to 455, 461 to 483, 544 to 566, 572 to 594, 600 to 622, 628 to 650, and 656 to 678; these read NECNECRKTFSKRSTLIVHQRIH, YVCSDCRKTFRVKTSLTRHRRIH, YECSECRKTFIDKSALIVHQKIH, YECNECGKTFFRKSALAEHFRSH, YECKECGNAFSKKSYLVVHQRTH, NECKECGKTFFCQSALTAHQRIH, YECSECEKTFFCQSALNVHRRSH, YECSQCGKFLCTKSALIAHQITH, YECNECGKFFCHKSTLTIHQRTH, YECNECGRTYCRKSALTHHQRTH, YECNECGKTFCQKFSFVEHQRTH, YECNECGKSFCHKSAFRVHRRIH, YECNQCGKTYRRLWTLTEHQKIH, and YECNKCEKTFRHKSNFLLHQKSH.

This sequence belongs to the krueppel C2H2-type zinc-finger protein family.

It is found in the nucleus. May be involved in transcriptional regulation. This chain is Zinc finger protein 334 (ZNF334), found in Homo sapiens (Human).